The chain runs to 179 residues: Large ribosomal subunit protein uL5 (179 aa).

The protein belongs to the universal ribosomal protein uL5 family. As to quaternary structure, part of the 50S ribosomal subunit; part of the 5S rRNA/L5/L18/L25 subcomplex. Contacts the 5S rRNA and the P site tRNA. Forms a bridge to the 30S subunit in the 70S ribosome.

Its function is as follows. This is one of the proteins that bind and probably mediate the attachment of the 5S RNA into the large ribosomal subunit, where it forms part of the central protuberance. In the 70S ribosome it contacts protein S13 of the 30S subunit (bridge B1b), connecting the 2 subunits; this bridge is implicated in subunit movement. Contacts the P site tRNA; the 5S rRNA and some of its associated proteins might help stabilize positioning of ribosome-bound tRNAs. This Thiobacillus denitrificans (strain ATCC 25259 / T1) protein is Large ribosomal subunit protein uL5.